Reading from the N-terminus, the 219-residue chain is Virginiamycin A acetyltransferase (219 aa).

His-87 is a catalytic residue.

This sequence belongs to the transferase hexapeptide repeat family.

Inactivates the A compounds of virginiamycin-like antibiotics, thus providing resistance to these antibiotics. This chain is Virginiamycin A acetyltransferase (vat), found in Staphylococcus aureus.